Reading from the N-terminus, the 335-residue chain is D-alanine--D-alanine ligase (335 aa).

Residues 124–329 (KMWFSALGVP…FTHYLYSNIK (206 aa)) enclose the ATP-grasp domain. 154–209 (ALENWGSIFIKAASQGSSVGCYRVDSQDELVSSLEQAFSFSPYVIVEKTINARELE) provides a ligand contact to ATP. Asp-283, Glu-296, and Asn-298 together coordinate Mg(2+).

Belongs to the D-alanine--D-alanine ligase family. Mg(2+) is required as a cofactor. The cofactor is Mn(2+).

It localises to the cytoplasm. The catalysed reaction is 2 D-alanine + ATP = D-alanyl-D-alanine + ADP + phosphate + H(+). It functions in the pathway cell wall biogenesis; peptidoglycan biosynthesis. In terms of biological role, cell wall formation. The protein is D-alanine--D-alanine ligase of Shewanella woodyi (strain ATCC 51908 / MS32).